The following is a 201-amino-acid chain: 3-isopropylmalate dehydratase small subunit (201 aa).

It belongs to the LeuD family. LeuD type 1 subfamily. As to quaternary structure, heterodimer of LeuC and LeuD.

It carries out the reaction (2R,3S)-3-isopropylmalate = (2S)-2-isopropylmalate. It participates in amino-acid biosynthesis; L-leucine biosynthesis; L-leucine from 3-methyl-2-oxobutanoate: step 2/4. Functionally, catalyzes the isomerization between 2-isopropylmalate and 3-isopropylmalate, via the formation of 2-isopropylmaleate. In Paramagnetospirillum magneticum (strain ATCC 700264 / AMB-1) (Magnetospirillum magneticum), this protein is 3-isopropylmalate dehydratase small subunit.